The sequence spans 299 residues: Acetaldehyde dehydrogenase (299 aa).

The active-site Acyl-thioester intermediate is cysteine 126. NAD(+)-binding positions include 157–165 (SAGPGTRQN) and asparagine 267.

The protein belongs to the acetaldehyde dehydrogenase family.

The catalysed reaction is acetaldehyde + NAD(+) + CoA = acetyl-CoA + NADH + H(+). The sequence is that of Acetaldehyde dehydrogenase (mhpF) from Carboxydothermus hydrogenoformans (strain ATCC BAA-161 / DSM 6008 / Z-2901).